The following is a 335-amino-acid chain: Glycerol-3-phosphate dehydrogenase [NAD(P)+] (335 aa).

Residues Ser10, Phe11, Arg31, and Lys105 each contribute to the NADPH site. Sn-glycerol 3-phosphate contacts are provided by Lys105, Gly136, and Ser138. Residue Ala140 participates in NADPH binding. The sn-glycerol 3-phosphate site is built by Lys191, Asp244, Ser254, Arg255, and Asn256. Catalysis depends on Lys191, which acts as the Proton acceptor. Arg255 serves as a coordination point for NADPH. Residues Val279 and Glu281 each coordinate NADPH.

It belongs to the NAD-dependent glycerol-3-phosphate dehydrogenase family.

The protein resides in the cytoplasm. It catalyses the reaction sn-glycerol 3-phosphate + NAD(+) = dihydroxyacetone phosphate + NADH + H(+). It carries out the reaction sn-glycerol 3-phosphate + NADP(+) = dihydroxyacetone phosphate + NADPH + H(+). It participates in membrane lipid metabolism; glycerophospholipid metabolism. Catalyzes the reduction of the glycolytic intermediate dihydroxyacetone phosphate (DHAP) to sn-glycerol 3-phosphate (G3P), the key precursor for phospholipid synthesis. The polypeptide is Glycerol-3-phosphate dehydrogenase [NAD(P)+] (Leptospira interrogans serogroup Icterohaemorrhagiae serovar copenhageni (strain Fiocruz L1-130)).